The primary structure comprises 1025 residues: Multidrug resistance protein MdtC (1025 aa).

The next 12 helical transmembrane spans lie at 3–23 (FFALFIYRPVATILLSVAITL), 333–353 (EVEQTLIISVALVILVVFLFL), 360–380 (IIPAVAVPVSLIGTFAAMYLC), 387–407 (LSLMALTIATGFVVDDAIVVL), 431–451 (VGFTVLSMSLSLVAVFLPLLL), 463–483 (FAVTLSVAIGISLLVSLTLTP), 528–548 (LVGVVLLGTIALNIWLYISIP), 853–873 (VILIIAAIATVYIVLGILYES), 875–895 (VHPLTILSTLPSAGVGALLAL), 897–917 (LFNAPFSLIALIGIMLLIGIV), 953–973 (PIMMTTLAALFGALPLVLSGG), and 984–1004 (ITIVGGLVMSQLLTLYTTPVV).

It belongs to the resistance-nodulation-cell division (RND) (TC 2.A.6) family. MdtC subfamily. Part of a tripartite efflux system composed of MdtA, MdtB and MdtC. MdtC forms a heteromultimer with MdtB.

The protein resides in the cell inner membrane. Functionally, the MdtABC tripartite complex confers resistance against novobiocin and deoxycholate. This Escherichia coli O127:H6 (strain E2348/69 / EPEC) protein is Multidrug resistance protein MdtC.